The sequence spans 99 residues: Aspartyl/glutamyl-tRNA(Asn/Gln) amidotransferase subunit C (99 aa).

It belongs to the GatC family. Heterotrimer of A, B and C subunits.

It catalyses the reaction L-glutamyl-tRNA(Gln) + L-glutamine + ATP + H2O = L-glutaminyl-tRNA(Gln) + L-glutamate + ADP + phosphate + H(+). It carries out the reaction L-aspartyl-tRNA(Asn) + L-glutamine + ATP + H2O = L-asparaginyl-tRNA(Asn) + L-glutamate + ADP + phosphate + 2 H(+). In terms of biological role, allows the formation of correctly charged Asn-tRNA(Asn) or Gln-tRNA(Gln) through the transamidation of misacylated Asp-tRNA(Asn) or Glu-tRNA(Gln) in organisms which lack either or both of asparaginyl-tRNA or glutaminyl-tRNA synthetases. The reaction takes place in the presence of glutamine and ATP through an activated phospho-Asp-tRNA(Asn) or phospho-Glu-tRNA(Gln). This is Aspartyl/glutamyl-tRNA(Asn/Gln) amidotransferase subunit C from Paraburkholderia phytofirmans (strain DSM 17436 / LMG 22146 / PsJN) (Burkholderia phytofirmans).